We begin with the raw amino-acid sequence, 491 residues long: COP9 signalosome complex subunit 1 (491 aa).

The region spanning 269–431 (CLLLASFDHC…KILYARDVDQ (163 aa)) is the PCI domain. A disordered region spans residues 465-491 (HVKSPPREGSQGELTPANSQSRMSTNM). S468 and S474 each carry phosphoserine. Positions 476 to 491 (GELTPANSQSRMSTNM) are enriched in polar residues. Residue T479 is modified to Phosphothreonine. The residue at position 483 (S483) is a Phosphoserine.

This sequence belongs to the CSN1 family. As to quaternary structure, component of the CSN complex, composed of COPS1/GPS1, COPS2, COPS3, COPS4, COPS5, COPS6, COPS7 (COPS7A or COPS7B), COPS8 and COPS9 isoform 1. In the complex, it probably interacts directly with COPS2, COPS3, COPS4 and COPS5. Interacts directly with inositol kinase ITPK1. Interacts with CAPN8. Interacts with USP48. Interacts with ASB4; this interaction negatively regulates GPS1. Widely expressed.

The protein localises to the cytoplasm. It is found in the nucleus. In terms of biological role, essential component of the COP9 signalosome complex (CSN), a complex involved in various cellular and developmental processes. The CSN complex is an essential regulator of the ubiquitin (Ubl) conjugation pathway by mediating the deneddylation of the cullin subunits of SCF-type E3 ligase complexes, leading to decrease the Ubl ligase activity of SCF-type complexes such as SCF, CSA or DDB2. The complex is also involved in phosphorylation of p53/TP53, c-jun/JUN, IkappaBalpha/NFKBIA, ITPK1 and IRF8/ICSBP, possibly via its association with CK2 and PKD kinases. CSN-dependent phosphorylation of TP53 and JUN promotes and protects degradation by the Ubl system, respectively. Suppresses G-protein- and mitogen-activated protein kinase-mediated signal transduction. The polypeptide is COP9 signalosome complex subunit 1 (GPS1) (Homo sapiens (Human)).